The following is a 473-amino-acid chain: Aspartyl/glutamyl-tRNA(Asn/Gln) amidotransferase subunit B (473 aa).

This sequence belongs to the GatB/GatE family. GatB subfamily. Heterotrimer of A, B and C subunits.

The catalysed reaction is L-glutamyl-tRNA(Gln) + L-glutamine + ATP + H2O = L-glutaminyl-tRNA(Gln) + L-glutamate + ADP + phosphate + H(+). It carries out the reaction L-aspartyl-tRNA(Asn) + L-glutamine + ATP + H2O = L-asparaginyl-tRNA(Asn) + L-glutamate + ADP + phosphate + 2 H(+). Functionally, allows the formation of correctly charged Asn-tRNA(Asn) or Gln-tRNA(Gln) through the transamidation of misacylated Asp-tRNA(Asn) or Glu-tRNA(Gln) in organisms which lack either or both of asparaginyl-tRNA or glutaminyl-tRNA synthetases. The reaction takes place in the presence of glutamine and ATP through an activated phospho-Asp-tRNA(Asn) or phospho-Glu-tRNA(Gln). The protein is Aspartyl/glutamyl-tRNA(Asn/Gln) amidotransferase subunit B of Levilactobacillus brevis (strain ATCC 367 / BCRC 12310 / CIP 105137 / JCM 1170 / LMG 11437 / NCIMB 947 / NCTC 947) (Lactobacillus brevis).